A 1239-amino-acid polypeptide reads, in one-letter code: DNA polymerase subunit gamma-1 (1239 aa).

A disordered region spans residues 1–68 (MSRLLWRKVA…PQVLSSEGGQ (68 aa)). Low complexity-rich tracts occupy residues 9–36 (VAGA…SDPS) and 44–60 (QQQQ…QQPQ). Residues 43-55 (QQQQQQQQQQQQQ) form a does not contribute to polymerase and exonuclease enzymatic activities region. The Exo I signature appears at 196-200 (VFDVE). Residue D198 is the Exonuclease activity of the active site. The Exo II signature appears at 267–275 (VGHNVSFDR). Residue S306 participates in DNA binding. The interval 318–340 (GKHKVQPPTKQGQKSQRKARRGP) is disordered. Positions 395–403 (YCAQDVWAT) match the Exo III motif. The interval 506–531 (EPATASKLPIEGAGAPGDPMDQEDLG) is disordered. Residues 510-571 (ASKLPIEGAG…RPQHLPGHPG (62 aa)) are accessory-interacting determinant. Residue R579 coordinates RNA. Residue S593 coordinates DNA. Residues H754, G763, and K768 each contribute to the RNA site. 2 residues coordinate DNA: K806 and T849. Residues 858 to 864 (TWLTASN) form a trigger loop region. RNA-binding residues include S863 and R869. Residues 887 to 896 (VGADVDSQEL) carry the Pol A motif. Residues D890, V891, S893, E895, R943, K947, and Y951 each contribute to the a 2'-deoxyribonucleoside 5'-triphosphate site. 2 residues coordinate Mg(2+): D890 and V891. A Pol B motif is present at residues 943-958 (REHAKIFNYGRIYGAG). DNA is bound by residues T1094 and S1095. Positions 1134–1141 (HDEVRYLV) match the Pol C motif. D1135 serves as a coordination point for a 2'-deoxyribonucleoside 5'-triphosphate. A Mg(2+)-binding site is contributed by D1135.

The protein belongs to the DNA polymerase type-A family. Heterotrimer composed of a catalytic subunit and a homodimer of accessory subunits (POLG:POLG2). Interacts with TTC3. Interacts with LIG3. The cofactor is Mg(2+).

The protein localises to the mitochondrion. It is found in the mitochondrion matrix. It localises to the mitochondrion nucleoid. The enzyme catalyses DNA(n) + a 2'-deoxyribonucleoside 5'-triphosphate = DNA(n+1) + diphosphate. The catalysed reaction is a 3'-end 2'-deoxyribonucleotidyl-deoxyribonucleotide-DNA + H2O = a 3'-end 2'-deoxyribonucleotide-DNA + a 2'-deoxyribonucleoside 5'-phosphate + H(+). It carries out the reaction a 5'-end 2'-deoxyribose-2'-deoxyribonucleotide-DNA = (2E,4S)-4-hydroxypenten-2-al-5-phosphate + a 5'-end 5'-phospho-2'-deoxyribonucleoside-DNA + H(+). Inhibited by dideoxynucleotides such as antiviral agent zalcitabine. Functionally, catalytic subunit of DNA polymerase gamma solely responsible for replication of mitochondrial DNA (mtDNA). Replicates both heavy and light strands of the circular mtDNA genome using a single-stranded DNA template, RNA primers and the four deoxyribonucleoside triphosphates as substrates. Has 5' -&gt; 3' polymerase activity. Functionally interacts with TWNK and SSBP1 at the replication fork to form a highly processive replisome, where TWNK unwinds the double-stranded DNA template prior to replication and SSBP1 covers the parental heavy strand to enable continuous replication of the entire mitochondrial genome. A single nucleotide incorporation cycle includes binding of the incoming nucleotide at the insertion site, a phosphodiester bond formation reaction that extends the 3'-end of the primer DNA, and translocation of the primer terminus to the post-insertion site. After completing replication of a mtDNA strand, mediates 3' -&gt; 5' exonucleolytic degradation at the nick to enable proper ligation. Highly accurate due to high nucleotide selectivity and 3' -&gt; 5' exonucleolytic proofreading. Proficiently corrects base substitutions, single-base additions and deletions in non-repetitive sequences and short repeats, but displays lower proofreading activity when replicating longer homopolymeric stretches. Exerts exonuclease activity toward single-stranded DNA and double-stranded DNA containing 3'-terminal mispairs. When a misincorporation occurs, transitions from replication to a pro-nucleolytic editing mode and removes the missincorporated nucleoside in the exonuclease active site. Proceeds via an SN2 nucleolytic mechanism in which Asp-198 catalyzes phosphodiester bond hydrolysis and Glu-200 stabilizes the leaving group. As a result the primer strand becomes one nucleotide shorter and is positioned in the post-insertion site, ready to resume DNA synthesis. Exerts 5'-deoxyribose phosphate (dRP) lyase activity and mediates repair-associated mtDNA synthesis (gap filling) in base-excision repair pathway. Catalyzes the release of the 5'-terminal 2-deoxyribose-5-phosphate sugar moiety from incised apurinic/apyrimidinic (AP) sites to produce a substrate for DNA ligase. The dRP lyase reaction does not require divalent metal ions and likely proceeds via a Schiff base intermediate in a beta-elimination reaction mechanism. This is DNA polymerase subunit gamma-1 from Homo sapiens (Human).